The primary structure comprises 348 residues: uncharacterized protein (348 aa).

WD repeat units follow at residues 59–98 (GFQG…VVYS), 142–182 (GHTD…LIQT), 185–226 (DNLG…LLGT), 229–267 (QQPG…ELFS), 270–309 (GPSL…QVTT), and 312–347 (GHQG…SALA).

This is an uncharacterized protein from Synechocystis sp. (strain ATCC 27184 / PCC 6803 / Kazusa).